A 201-amino-acid chain; its full sequence is Holliday junction branch migration complex subunit RuvA (201 aa).

The segment at 1–61 (MIEFVKGTID…EDAFSLYGFS (61 aa)) is domain I. Residues 62–140 (TREEKALFTK…DVVPEMIDNL (79 aa)) are domain II. Positions 141-150 (FNHEARIEKQ) are flexible linker. The interval 151 to 201 (EAETALDEALEALRVLGYAEKEIKKVLPHLKEETALSTDQYVKKALQKLLK) is domain III.

It belongs to the RuvA family. In terms of assembly, homotetramer. Forms an RuvA(8)-RuvB(12)-Holliday junction (HJ) complex. HJ DNA is sandwiched between 2 RuvA tetramers; dsDNA enters through RuvA and exits via RuvB. An RuvB hexamer assembles on each DNA strand where it exits the tetramer. Each RuvB hexamer is contacted by two RuvA subunits (via domain III) on 2 adjacent RuvB subunits; this complex drives branch migration. In the full resolvosome a probable DNA-RuvA(4)-RuvB(12)-RuvC(2) complex forms which resolves the HJ.

It localises to the cytoplasm. Its function is as follows. The RuvA-RuvB-RuvC complex processes Holliday junction (HJ) DNA during genetic recombination and DNA repair, while the RuvA-RuvB complex plays an important role in the rescue of blocked DNA replication forks via replication fork reversal (RFR). RuvA specifically binds to HJ cruciform DNA, conferring on it an open structure. The RuvB hexamer acts as an ATP-dependent pump, pulling dsDNA into and through the RuvAB complex. HJ branch migration allows RuvC to scan DNA until it finds its consensus sequence, where it cleaves and resolves the cruciform DNA. This chain is Holliday junction branch migration complex subunit RuvA, found in Bacillus velezensis (strain DSM 23117 / BGSC 10A6 / LMG 26770 / FZB42) (Bacillus amyloliquefaciens subsp. plantarum).